Here is a 338-residue protein sequence, read N- to C-terminus: UDP-glucose 4-epimerase (338 aa).

Residues 11 to 12 (YI), 31 to 36 (DNLCNS), 58 to 59 (DI), 80 to 84 (FAGLK), Asn-99, Ser-124, Tyr-149, Lys-153, and Phe-178 contribute to the NAD(+) site. Positions 124 and 149 each coordinate substrate. The Proton acceptor role is filled by Tyr-149. Residues Asn-179, 199 to 200 (NL), 216 to 218 (SVF), Arg-231, and 292 to 295 (RPGD) contribute to the substrate site.

Belongs to the NAD(P)-dependent epimerase/dehydratase family. Homodimer. It depends on NAD(+) as a cofactor.

The catalysed reaction is UDP-alpha-D-glucose = UDP-alpha-D-galactose. The protein operates within carbohydrate metabolism; galactose metabolism. Functionally, involved in the metabolism of galactose. Catalyzes the conversion of UDP-galactose (UDP-Gal) to UDP-glucose (UDP-Glc) through a mechanism involving the transient reduction of NAD. This chain is UDP-glucose 4-epimerase (galE), found in Pasteurella multocida (strain Pm70).